Here is a 220-residue protein sequence, read N- to C-terminus: Glutathione S-transferase U26 (220 aa).

One can recognise a GST N-terminal domain in the interval 4–83 (DQVILLDYWP…YIDEVWSDAS (80 aa)). Residues 14–15 (SM), 40–41 (VK), 54–55 (KI), and 67–68 (ES) contribute to the glutathione site. Positions 89 to 210 (DPYQKSRARF…ADSDRIIEYV (122 aa)) constitute a GST C-terminal domain.

The protein belongs to the GST superfamily. Tau family.

It is found in the cytoplasm. The protein localises to the cytosol. The catalysed reaction is RX + glutathione = an S-substituted glutathione + a halide anion + H(+). Functionally, in vitro, possesses glutathione S-transferase activity toward 1-chloro-2,4-dinitrobenzene (CDNB). May be involved in the conjugation of reduced glutathione to a wide number of exogenous and endogenous hydrophobic electrophiles and have a detoxification role against certain herbicides. The polypeptide is Glutathione S-transferase U26 (GSTU26) (Arabidopsis thaliana (Mouse-ear cress)).